Here is a 130-residue protein sequence, read N- to C-terminus: Small ribosomal subunit protein uS8 (130 aa).

The protein belongs to the universal ribosomal protein uS8 family. As to quaternary structure, part of the 30S ribosomal subunit. Contacts proteins S5 and S12.

Functionally, one of the primary rRNA binding proteins, it binds directly to 16S rRNA central domain where it helps coordinate assembly of the platform of the 30S subunit. The chain is Small ribosomal subunit protein uS8 from Wigglesworthia glossinidia brevipalpis.